The primary structure comprises 321 residues: UPF0026 protein MJ1312 (321 aa).

Positions 11–236 constitute a Radical SAM core domain; the sequence is RRLGKSLGIN…AIFNEIIGKN (226 aa). The [4Fe-4S] cluster site is built by Cys-27, Cys-31, and Cys-34.

It belongs to the UPF0026 family. [4Fe-4S] cluster is required as a cofactor.

In Methanocaldococcus jannaschii (strain ATCC 43067 / DSM 2661 / JAL-1 / JCM 10045 / NBRC 100440) (Methanococcus jannaschii), this protein is UPF0026 protein MJ1312.